A 207-amino-acid polypeptide reads, in one-letter code: 3-hexulose-6-phosphate synthase (207 aa).

This sequence belongs to the HPS/KGPDC family. HPS subfamily.

It catalyses the reaction D-ribulose 5-phosphate + formaldehyde = D-arabino-hex-3-ulose 6-phosphate. Its pathway is one-carbon metabolism; formaldehyde assimilation via RuMP pathway; D-fructose 6-phosphate from D-ribulose 5-phosphate and formaldehyde: step 1/2. In terms of biological role, catalyzes the condensation of ribulose 5-phosphate with formaldehyde to form 3-hexulose 6-phosphate. The protein is 3-hexulose-6-phosphate synthase (rmpA) of Mycobacterium gastri.